The chain runs to 95 residues: Aspartyl/glutamyl-tRNA(Asn/Gln) amidotransferase subunit C (95 aa).

This sequence belongs to the GatC family. As to quaternary structure, heterotrimer of A, B and C subunits.

The catalysed reaction is L-glutamyl-tRNA(Gln) + L-glutamine + ATP + H2O = L-glutaminyl-tRNA(Gln) + L-glutamate + ADP + phosphate + H(+). The enzyme catalyses L-aspartyl-tRNA(Asn) + L-glutamine + ATP + H2O = L-asparaginyl-tRNA(Asn) + L-glutamate + ADP + phosphate + 2 H(+). Functionally, allows the formation of correctly charged Asn-tRNA(Asn) or Gln-tRNA(Gln) through the transamidation of misacylated Asp-tRNA(Asn) or Glu-tRNA(Gln) in organisms which lack either or both of asparaginyl-tRNA or glutaminyl-tRNA synthetases. The reaction takes place in the presence of glutamine and ATP through an activated phospho-Asp-tRNA(Asn) or phospho-Glu-tRNA(Gln). The protein is Aspartyl/glutamyl-tRNA(Asn/Gln) amidotransferase subunit C of Brucella anthropi (strain ATCC 49188 / DSM 6882 / CCUG 24695 / JCM 21032 / LMG 3331 / NBRC 15819 / NCTC 12168 / Alc 37) (Ochrobactrum anthropi).